We begin with the raw amino-acid sequence, 1042 residues long: Probable inorganic carbon transporter subunit DabA (1042 aa).

4 residues coordinate Zn(2+): C462, D464, H721, and C736.

It belongs to the inorganic carbon transporter (TC 9.A.2) DabA family. Forms a complex with DabB. Zn(2+) is required as a cofactor.

Its subcellular location is the cell inner membrane. Functionally, part of an energy-coupled inorganic carbon pump. The protein is Probable inorganic carbon transporter subunit DabA of Nitrosomonas eutropha (strain DSM 101675 / C91 / Nm57).